The primary structure comprises 222 residues: Transmembrane protein 54 (222 aa).

Transmembrane regions (helical) follow at residues 22-42 (LVLV…HGTV), 62-82 (ILSV…IVLS), 100-120 (ACAL…AMTF), and 155-175 (SSLC…VFAV).

It belongs to the TMEM54 family. As to expression, ubiquitously expressed in cancer cell lines.

It localises to the membrane. The sequence is that of Transmembrane protein 54 (TMEM54) from Homo sapiens (Human).